Consider the following 233-residue polypeptide: Large ribosomal subunit protein uL22m (233 aa).

The protein belongs to the universal ribosomal protein uL22 family. As to quaternary structure, component of the mitochondrial ribosome large subunit (39S) which comprises a 16S rRNA and about 50 distinct proteins.

It localises to the mitochondrion. This chain is Large ribosomal subunit protein uL22m (mRpL22), found in Drosophila pseudoobscura pseudoobscura (Fruit fly).